The chain runs to 656 residues: Acyl-CoA-binding domain-containing protein 6 (656 aa).

Residues 8-102 (YPDRFYAAAA…LEEEDPGWYS (95 aa)) enclose the ACB domain. Residues 44 to 48 (YGLYQ) and Lys70 contribute to the an acyl-CoA site. The interval 129–148 (ASTNGTSVPEPKTISENGSS) is disordered. 6 Kelch repeats span residues 194-241 (KMYI…AQVS), 254-304 (KFFS…LVGT), 305-354 (TLVL…CHAD), 356-405 (YLLI…TVGE), 406-454 (NWYI…LVHS), and 461-507 (YLIS…EPEV). A coiled-coil region spans residues 527–636 (LKKDDANELL…EQAALEAKQR (110 aa)). Positions 627 to 656 (EQAALEAKQRQSSSGMWGWLVGTPPDKSES) are disordered.

This sequence belongs to the ACBP family. As to expression, highly expressed in leaves. Expressed in roots and seeds.

It is found in the peroxisome. Functionally, binds medium- and long-chain acyl-CoA esters with high affinity. Can interact in vitro with linoleoyl-CoA and linolenoyl-CoA. Binds phosphatidic acid (PA) and phosphatidylcholine (PC) in vitro. May play a role in the biosynthesis of phospholipids. May be involved in lipid degradation via peroxisomal beta-oxydation. The polypeptide is Acyl-CoA-binding domain-containing protein 6 (Oryza sativa subsp. japonica (Rice)).